The primary structure comprises 127 residues: MAYAIIEASDKQLWVEPGRFYDLDRLDADLDQSLTLDKVLLVQDEGAPQIGQPYVAGATVQVTVLSHPRGRKVTVYKMTPKKKTRKKQGHRQDLTRVLVESITVGGKVLTANAADLPKSEADIDAAG.

The protein belongs to the bacterial ribosomal protein bL21 family. In terms of assembly, part of the 50S ribosomal subunit. Contacts protein L20.

This protein binds to 23S rRNA in the presence of protein L20. The sequence is that of Large ribosomal subunit protein bL21 from Synechococcus sp. (strain ATCC 27144 / PCC 6301 / SAUG 1402/1) (Anacystis nidulans).